Reading from the N-terminus, the 348-residue chain is Alcohol dehydrogenase 1 (348 aa).

Ser2 is modified (N-acetylserine). Cys44 provides a ligand contact to Zn(2+). Residues His45, Thr46, and His49 each coordinate NAD(+). 7 residues coordinate Zn(2+): His67, Glu68, Cys98, Cys101, Cys104, Cys112, and Cys154. Residues Gly181, Gly182, Leu183, Asp202, and Lys207 each contribute to the NAD(+) site. Position 213 is a phosphoserine (Ser213). Position 222 (Phe222) interacts with NAD(+). The residue at position 223 (Thr223) is a Phosphothreonine. Residues Lys226 and Lys234 each participate in a glycyl lysine isopeptide (Lys-Gly) (interchain with G-Cter in ubiquitin) cross-link. 2 residues coordinate NAD(+): Val269 and Met271. Ser279 is modified (phosphoserine). Lys287 participates in a covalent cross-link: Glycyl lysine isopeptide (Lys-Gly) (interchain with G-Cter in ubiquitin). Ser294 and Val296 together coordinate NAD(+). Position 316 is a phosphoserine (Ser316). Lys319 is covalently cross-linked (Glycyl lysine isopeptide (Lys-Gly) (interchain with G-Cter in ubiquitin)). Residue Arg341 participates in NAD(+) binding.

The protein belongs to the zinc-containing alcohol dehydrogenase family. As to quaternary structure, homotetramer. The cofactor is Zn(2+).

It is found in the cytoplasm. It carries out the reaction a primary alcohol + NAD(+) = an aldehyde + NADH + H(+). It catalyses the reaction a secondary alcohol + NAD(+) = a ketone + NADH + H(+). The catalysed reaction is ethanol + NAD(+) = acetaldehyde + NADH + H(+). The enzyme catalyses allyl alcohol + NADP(+) = acrolein + NADPH + H(+). It carries out the reaction 1-propanol + NAD(+) = propanal + NADH + H(+). It catalyses the reaction butan-1-ol + NAD(+) = butanal + NADH + H(+). The catalysed reaction is hexan-1-ol + NAD(+) = hexanal + NADH + H(+). The enzyme catalyses (R)-lactaldehyde + NAD(+) = methylglyoxal + NADH + H(+). It carries out the reaction octan-1-ol + NAD(+) = octanal + NADH + H(+). It catalyses the reaction butan-2-ol + NAD(+) = butan-2-one + NADH + H(+). The catalysed reaction is propan-2-ol + NAD(+) = acetone + NADH + H(+). The enzyme catalyses isobutanol + NAD(+) = 2-methylpropanal + NADH + H(+). Preferentially fermentative isozyme that reduces acetaldehyde to ethanol during the fermentation of glucose. Major enzyme required for the conversion of acetaldehyde to ethanol. Plays a key role in the carbohydrate metabolism through the regeneration of NAD(+) from glycolytic NADH. In the reverse reaction, preferentially catalyzes the conversion of primary unbranched alcohols to their corresponding aldehydes. Also shows activity toward secondary alcohols. Most active with ethanol, and its activity decreases as the size of the alcohol is increased. This is Alcohol dehydrogenase 1 (ADH1) from Saccharomyces cerevisiae (strain ATCC 204508 / S288c) (Baker's yeast).